The sequence spans 124 residues: Phosphoribosyl-ATP pyrophosphatase (124 aa).

Belongs to the PRA-PH family.

The protein resides in the cytoplasm. It carries out the reaction 1-(5-phospho-beta-D-ribosyl)-ATP + H2O = 1-(5-phospho-beta-D-ribosyl)-5'-AMP + diphosphate + H(+). Its pathway is amino-acid biosynthesis; L-histidine biosynthesis; L-histidine from 5-phospho-alpha-D-ribose 1-diphosphate: step 2/9. The chain is Phosphoribosyl-ATP pyrophosphatase (hisE) from Ralstonia nicotianae (strain ATCC BAA-1114 / GMI1000) (Ralstonia solanacearum).